We begin with the raw amino-acid sequence, 270 residues long: Bis(5'-nucleosyl)-tetraphosphatase, symmetrical (270 aa).

The protein belongs to the Ap4A hydrolase family.

It catalyses the reaction P(1),P(4)-bis(5'-adenosyl) tetraphosphate + H2O = 2 ADP + 2 H(+). Functionally, hydrolyzes diadenosine 5',5'''-P1,P4-tetraphosphate to yield ADP. The protein is Bis(5'-nucleosyl)-tetraphosphatase, symmetrical of Actinobacillus pleuropneumoniae serotype 5b (strain L20).